A 69-amino-acid chain; its full sequence is Small, acid-soluble spore protein 1 (69 aa).

The protein belongs to the alpha/beta-type SASP family.

In terms of biological role, SASP are bound to spore DNA. They are double-stranded DNA-binding proteins that cause DNA to change to an a-like conformation. They protect the DNA backbone from chemical and enzymatic cleavage and are thus involved in dormant spore's high resistance to UV light. The polypeptide is Small, acid-soluble spore protein 1 (Su-1) (Sporosarcina ureae).